Consider the following 714-residue polypeptide: RB-associated KRAB zinc finger protein (714 aa).

Positions 8 to 79 (VSFKDVAVDF…GGEFPCQHSP (72 aa)) constitute a KRAB domain. Glycyl lysine isopeptide (Lys-Gly) (interchain with G-Cter in SUMO2) cross-links involve residues Lys97 and Lys259. Residues 171 to 260 (TYHGEKMCEF…YQRSQMEMKP (90 aa)) form a required for interaction with RB1 region. C2H2-type zinc fingers lie at residues 261 to 283 (FECS…QRAH) and 289 to 311 (YECN…RRSH). Lys315 is covalently cross-linked (Glycyl lysine isopeptide (Lys-Gly) (interchain with G-Cter in SUMO2)). 7 consecutive C2H2-type zinc fingers follow at residues 317–339 (YKCN…LRTH), 345–367 (YECS…QRNH), 373–395 (YPCN…QRTH), 401–423 (YKCN…QRTH), 429–451 (YQCS…YRSH), 457–479 (YECN…RKVH), and 485–505 (HECS…HTAH). A Glycyl lysine isopeptide (Lys-Gly) (interchain with G-Cter in SUMO2) cross-link involves residue Lys357. The interval 417 to 714 (ITHQRTHTGE…NMNVLDVENL (298 aa)) is interaction with AR. The C2H2-type 10; degenerate zinc-finger motif lies at 511 to 533 (YECNECGKTFLVNSAFDGHQPLP). Residues Lys534 and Lys537 each participate in a glycyl lysine isopeptide (Lys-Gly) (interchain with G-Cter in SUMO2) cross-link. 6 consecutive C2H2-type zinc fingers follow at residues 539 to 561 (YECN…YRSH), 567 to 589 (YGCS…QRVH), 595 to 617 (YECY…HRIH), 623 to 645 (YECS…YRSH), 651 to 673 (YECN…YRTH), and 679 to 701 (YECN…QRIH).

The protein belongs to the krueppel C2H2-type zinc-finger protein family. Interacts with AR and RB1. May also interact with other nuclear hormone receptors such as NR3C1/GR. In terms of tissue distribution, expressed in bone, brain, heart, kidney, liver, lung, pancreas and placenta.

It is found in the nucleus. May repress E2F-dependent transcription. May promote AR-dependent transcription. In Homo sapiens (Human), this protein is RB-associated KRAB zinc finger protein (RBAK).